The primary structure comprises 440 residues: Transposon Ty1-OL Gag polyprotein (440 aa).

Composition is skewed to polar residues over residues 1–23 (MESQQLSNYPQISHGSACASVTS), 48–60 (TKANSQQTTTPAS), and 127–152 (QSQFPQYPSSVGTPLSTPSPESGNTF). 3 disordered regions span residues 1–93 (MESQ…MMTQ), 126–173 (PQSQ…RPPP), and 352–440 (GSRN…PGTY). Low complexity predominate over residues 153–165 (TDSSSADSDMTST). The RNA-binding stretch occupies residues 299-401 (NNGIHINNKV…NSKSKTARAH (103 aa)). A compositionally biased stretch (low complexity) spans 402 to 418 (NVSTSNNSPSTDNDSIS). The residue at position 416 (S416) is a Phosphoserine. Positions 419 to 428 (KSTTEPIQLN) are enriched in polar residues. Positions 429–440 (NKHDLHLRPGTY) are enriched in basic and acidic residues.

Homotrimer.

Its subcellular location is the cytoplasm. Functionally, capsid protein (CA) is the structural component of the virus-like particle (VLP), forming the shell that encapsulates the retrotransposons dimeric RNA genome. The particles are assembled from trimer-clustered units and there are holes in the capsid shells that allow for the diffusion of macromolecules. CA also has nucleocapsid-like chaperone activity, promoting primer tRNA(i)-Met annealing to the multipartite primer-binding site (PBS), dimerization of Ty1 RNA and initiation of reverse transcription. The protein is Transposon Ty1-OL Gag polyprotein (TY1A-OL) of Saccharomyces cerevisiae (strain ATCC 204508 / S288c) (Baker's yeast).